Consider the following 614-residue polypeptide: 1-deoxy-D-xylulose-5-phosphate synthase (614 aa).

Residues histidine 74 and 115–117 each bind thiamine diphosphate; that span reads AHS. Aspartate 146 contacts Mg(2+). Residues 147–148, asparagine 175, tyrosine 282, and glutamate 363 each bind thiamine diphosphate; that span reads GA. Asparagine 175 contacts Mg(2+).

This sequence belongs to the transketolase family. DXPS subfamily. Homodimer. The cofactor is Mg(2+). It depends on thiamine diphosphate as a cofactor.

The catalysed reaction is D-glyceraldehyde 3-phosphate + pyruvate + H(+) = 1-deoxy-D-xylulose 5-phosphate + CO2. The protein operates within metabolic intermediate biosynthesis; 1-deoxy-D-xylulose 5-phosphate biosynthesis; 1-deoxy-D-xylulose 5-phosphate from D-glyceraldehyde 3-phosphate and pyruvate: step 1/1. In terms of biological role, catalyzes the acyloin condensation reaction between C atoms 2 and 3 of pyruvate and glyceraldehyde 3-phosphate to yield 1-deoxy-D-xylulose-5-phosphate (DXP). This chain is 1-deoxy-D-xylulose-5-phosphate synthase, found in Nitrosomonas eutropha (strain DSM 101675 / C91 / Nm57).